The primary structure comprises 200 residues: General odorant-binding protein 70 (200 aa).

An N-terminal signal peptide occupies residues 1 to 29 (MRRQYSMWASTVAVIACGSALMLLHPVGA). Disulfide bonds link cysteine 105–cysteine 174 and cysteine 152–cysteine 183.

This sequence belongs to the PBP/GOBP family.

Its subcellular location is the secreted. Functionally, present in the aqueous fluid surrounding olfactory sensory dendrites and are thought to aid in the capture and transport of hydrophobic odorants into and through this fluid. The chain is General odorant-binding protein 70 (Obp70) from Anopheles gambiae (African malaria mosquito).